A 147-amino-acid chain; its full sequence is MAPSAPAKTAKALDAKKKVVKGKRTTHRRQVRTSVHFRRPVTLKTARQARFPRKSAPKTSKMDHFRIIQHPLTTESAMKKIEEHNTLVFIVSNDANKYQIKDAVHKLYNVQALKVNTLITPLQQKKAYVRLTADYDALDVANKIGVI.

Low complexity predominate over residues 1 to 10 (MAPSAPAKTA). The interval 1–29 (MAPSAPAKTAKALDAKKKVVKGKRTTHRR) is disordered. Residues 18–29 (KVVKGKRTTHRR) show a composition bias toward basic residues.

This sequence belongs to the universal ribosomal protein uL23 family.

This protein binds to a specific region on the 26S rRNA. This Caenorhabditis elegans protein is Large ribosomal subunit protein uL23A.